We begin with the raw amino-acid sequence, 294 residues long: Bifunctional protein FolD (294 aa).

Residues 166–168 (GRS), Ser191, and Ile232 each bind NADP(+).

It belongs to the tetrahydrofolate dehydrogenase/cyclohydrolase family. Homodimer.

The catalysed reaction is (6R)-5,10-methylene-5,6,7,8-tetrahydrofolate + NADP(+) = (6R)-5,10-methenyltetrahydrofolate + NADPH. It carries out the reaction (6R)-5,10-methenyltetrahydrofolate + H2O = (6R)-10-formyltetrahydrofolate + H(+). The protein operates within one-carbon metabolism; tetrahydrofolate interconversion. Catalyzes the oxidation of 5,10-methylenetetrahydrofolate to 5,10-methenyltetrahydrofolate and then the hydrolysis of 5,10-methenyltetrahydrofolate to 10-formyltetrahydrofolate. The protein is Bifunctional protein FolD of Bradyrhizobium sp. (strain ORS 278).